Consider the following 211-residue polypeptide: Regulator of G-protein signaling 2 (211 aa).

Positions 32–66 (KMKRTLLKDWKTRLSYFLQNSSAPGKPKTGKKSKQ) are necessary for membrane association. Positions 79–116 (LWAEAFDELLASKYGLAAFRAFLKSEFCEENIEFWLAC) are necessary to inhibit protein synthesis. Residues 83 to 199 (AFDELLASKY…LESEFYQDLC (117 aa)) form the RGS domain.

In terms of assembly, interacts with GNAQ. Does not interact with GNAI1 and GNAI3. Interacts with EIF2B5. Interacts with PRKG1 (isoform alpha). In terms of processing, phosphorylated by protein kinase C. Phosphorylation by PRKG1 leads to activation of RGS2 activity. As to expression, expressed in a wide variety of tissues.

It is found in the cell membrane. The protein localises to the cytoplasm. The protein resides in the nucleus. It localises to the nucleolus. Regulates G protein-coupled receptor signaling cascades. Inhibits signal transduction by increasing the GTPase activity of G protein alpha subunits, thereby driving them into their inactive GDP-bound form. It is involved in the negative regulation of the angiotensin-activated signaling pathway. Plays a role in the regulation of blood pressure in response to signaling via G protein-coupled receptors and GNAQ. Plays a role in regulating the constriction and relaxation of vascular smooth muscle. Binds EIF2B5 and blocks its activity, thereby inhibiting the translation of mRNA into protein. This is Regulator of G-protein signaling 2 (Rgs2) from Mus musculus (Mouse).